The chain runs to 672 residues: Acetoacetyl-CoA synthetase (672 aa).

It belongs to the ATP-dependent AMP-binding enzyme family.

The protein resides in the cytoplasm. The protein localises to the cytosol. It catalyses the reaction acetoacetate + ATP + CoA = acetoacetyl-CoA + AMP + diphosphate. Activates acetoacetate to acetoacetyl-CoA. The protein is Acetoacetyl-CoA synthetase (aacs) of Xenopus tropicalis (Western clawed frog).